We begin with the raw amino-acid sequence, 717 residues long: Cleavage stimulation factor subunit 3 (717 aa).

An N-acetylserine modification is found at S2. 9 HAT repeats span residues 45 to 77, 79 to 110, 117 to 152, 163 to 196, 221 to 261, 271 to 303, 319 to 352, 354 to 387, and 458 to 494; these read QPID…AEIK, KNYD…YVRE, SYKE…FLKG, QRIT…YEEG, KEYE…WEKS, LITK…YLEQ, LFSD…YEES, MKYE…FARR, and NEDN…FESN. The segment at 683 to 704 is disordered; sequence AVKRPNEDSDEDEEKGAVVPPV. S691 bears the Phosphoserine mark.

Homodimer. The CSTF complex is composed of CSTF1 (50 kDa subunit), CSTF2 (64 kDa subunit) and CSTF3 (77 kDa subunit). CSTF3 directly interacts with CSTF1 and CSTF2. Interacts with FIP1L1.

The protein resides in the nucleus. Functionally, one of the multiple factors required for polyadenylation and 3'-end cleavage of mammalian pre-mRNAs. The chain is Cleavage stimulation factor subunit 3 (Cstf3) from Mus musculus (Mouse).